The following is a 298-amino-acid chain: ATP synthase gamma chain (298 aa).

The protein belongs to the ATPase gamma chain family. In terms of assembly, F-type ATPases have 2 components, CF(1) - the catalytic core - and CF(0) - the membrane proton channel. CF(1) has five subunits: alpha(3), beta(3), gamma(1), delta(1), epsilon(1). CF(0) has three main subunits: a, b and c.

Its subcellular location is the cell inner membrane. Functionally, produces ATP from ADP in the presence of a proton gradient across the membrane. The gamma chain is believed to be important in regulating ATPase activity and the flow of protons through the CF(0) complex. The sequence is that of ATP synthase gamma chain from Francisella tularensis subsp. holarctica (strain LVS).